We begin with the raw amino-acid sequence, 491 residues long: Monodehydroascorbate reductase 5, chlorplastic (491 aa).

A chloroplast-targeting transit peptide spans 1-42; it reads MASTAAAASSQGCISWALRQRGLGGGGARAVPVLPRRRFCVS. FAD-binding positions include 61-64, Glu-88, Arg-95, Lys-100, and 194-195; these read GGNA and RD. NAD(+) is bound by residues 217 to 223, Glu-241, Arg-247, and Gly-306; that span reads GGYIGME. 219–223 lines the NADP(+) pocket; the sequence is YIGME. NADP(+) contacts are provided by Arg-247 and Gly-306. Asp-344 serves as a coordination point for FAD. 360–361 serves as a coordination point for NAD(+); it reads EH. 360–361 is an NADP(+) binding site; it reads EH. Val-362 is an FAD binding site. An L-ascorbate-binding site is contributed by Arg-366. Tyr-391 is an FAD binding site. Tyr-391 contributes to the NAD(+) binding site. Tyr-391 contributes to the NADP(+) binding site. Arg-393 serves as a coordination point for L-ascorbate.

Belongs to the FAD-dependent oxidoreductase family. Requires FAD as cofactor.

It is found in the plastid. It localises to the chloroplast. It catalyses the reaction 2 monodehydro-L-ascorbate radical + NADH + H(+) = 2 L-ascorbate + NAD(+). In terms of biological role, catalyzes the conversion of monodehydroascorbate to ascorbate, oxidizing NADH in the process. Ascorbate is a major antioxidant against reactive oxygen species (ROS) and nitric oxide (NO). The protein is Monodehydroascorbate reductase 5, chlorplastic of Oryza sativa subsp. japonica (Rice).